The sequence spans 647 residues: MQLSWKDIPTVAPANDLLDIVLNRTQRKTPTVIRPGFKITRIRAFYMRKVKYTGEGFVEKFEDILKGFPNINDVHPFHRDLMDTLYEKNHYKISLAAISRAKSLVEQVARDYVRLLKFGQSLFQCKQLKRAALGRMATIVKKLRDPLAYLEQVRQHIGRLPSIDPNTRTLLICGYPNVGKSSFLRCITKSDVDVQPYAFTTKSLYVGHFDYKYLRFQAIDTPGILDRPTEEMNNIEMQSIYAIAHLRSCVLYFMDLSEQCGFTIEAQVKLFHSIKPLFANKSVMVVINKTDIIRPEDLDEERAQLLESVKEVPGVEIMTSSCQLEENVMEVRNKACEKLLASRIENKLKSQSRINNVLNKIHVAQPQARDDVKRTPFIPESVKNLKKYDPEDPNRRKLARDIEAENGGAGVFNVNLKDKYLLEDDEWKNDIMPEILDGKNVYDFLDPEIAAKLQALEEEEEKLENEGFYNSDDEEEIYDGFEASEVDDIKEKAAWIRNRQKTMIAEARNRKSLKNKAIMPRSKLTKSFGKMEEHMSTLGHDMSALQDKQNRAARKNRYVERGSDVVFGDQDALTASTENGVKLRQTDRLLDGVADGSMRSKADRMAKMERRERNRHAKQGESDRHNAVSLSKHLFSGKRGVGKTDFR.

The OBG-type G domain maps to 168–340; that stretch reads RTLLICGYPN…VRNKACEKLL (173 aa). GTP contacts are provided by residues 174 to 181, 220 to 224, and 288 to 291; these read GYPNVGKS, DTPGI, and NKTD. Position 563 is a phosphoserine (Ser563). Residues 594-647 are disordered; the sequence is ADGSMRSKADRMAKMERRERNRHAKQGESDRHNAVSLSKHLFSGKRGVGKTDFR. The span at 598–626 shows a compositional bias: basic and acidic residues; that stretch reads MRSKADRMAKMERRERNRHAKQGESDRHN.

The protein belongs to the TRAFAC class OBG-HflX-like GTPase superfamily. OBG GTPase family. NOG subfamily. In terms of assembly, associated with nucleolar and cytoplasmic pre-60S particles. Directly interacts with RLP24.

The protein resides in the nucleus. The protein localises to the nucleolus. In terms of biological role, involved in the biogenesis of the 60S ribosomal subunit. This chain is Nucleolar GTP-binding protein 1 (NOG1), found in Saccharomyces cerevisiae (strain ATCC 204508 / S288c) (Baker's yeast).